Reading from the N-terminus, the 253-residue chain is Thiamine import ATP-binding protein ThiQ (253 aa).

Residues 8-236 enclose the ABC transporter domain; it reads VRLDKVSFSY…AGPEAFRRYI (229 aa). 38 to 45 serves as a coordination point for ATP; sequence GPSGSGKS.

It belongs to the ABC transporter superfamily. Thiamine importer (TC 3.A.1.19.1) family. In terms of assembly, the complex is composed of two ATP-binding proteins (ThiQ), two transmembrane proteins (ThiP) and a solute-binding protein (ThiB).

The protein resides in the cell inner membrane. The catalysed reaction is thiamine(out) + ATP + H2O = thiamine(in) + ADP + phosphate + H(+). In terms of biological role, part of the ABC transporter complex ThiBPQ involved in thiamine import. Responsible for energy coupling to the transport system. In Mesorhizobium japonicum (strain LMG 29417 / CECT 9101 / MAFF 303099) (Mesorhizobium loti (strain MAFF 303099)), this protein is Thiamine import ATP-binding protein ThiQ.